The chain runs to 682 residues: Potassium-transporting ATPase ATP-binding subunit (682 aa).

A run of 4 helical transmembrane segments spans residues 34 to 54 (PVMF…IAMA), 62 to 82 (ALFS…ANFA), 219 to 239 (IALT…TATL), and 254 to 274 (VLVA…LSAI). Aspartate 307 acts as the 4-aspartylphosphate intermediate in catalysis. Residues aspartate 344, glutamate 348, 377–384 (FTAQSRMS), and lysine 395 contribute to the ATP site. Positions 518 and 522 each coordinate Mg(2+). Helical transmembrane passes span 588-608 (FAII…LNIM), 616-636 (AILS…PLAL), and 656-676 (IYGL…DLLL).

Belongs to the cation transport ATPase (P-type) (TC 3.A.3) family. Type IA subfamily. In terms of assembly, the system is composed of three essential subunits: KdpA, KdpB and KdpC.

The protein resides in the cell inner membrane. The enzyme catalyses K(+)(out) + ATP + H2O = K(+)(in) + ADP + phosphate + H(+). Its function is as follows. Part of the high-affinity ATP-driven potassium transport (or Kdp) system, which catalyzes the hydrolysis of ATP coupled with the electrogenic transport of potassium into the cytoplasm. This subunit is responsible for energy coupling to the transport system and for the release of the potassium ions to the cytoplasm. In Escherichia coli O17:K52:H18 (strain UMN026 / ExPEC), this protein is Potassium-transporting ATPase ATP-binding subunit.